A 224-amino-acid chain; its full sequence is Cytidylate kinase (224 aa).

11 to 19 provides a ligand contact to ATP; that stretch reads GPAAAGKST.

The protein belongs to the cytidylate kinase family. Type 1 subfamily.

The protein localises to the cytoplasm. It catalyses the reaction CMP + ATP = CDP + ADP. The catalysed reaction is dCMP + ATP = dCDP + ADP. In Listeria innocua serovar 6a (strain ATCC BAA-680 / CLIP 11262), this protein is Cytidylate kinase.